Here is a 650-residue protein sequence, read N- to C-terminus: Serine/threonine-protein phosphatase with EF-hands 1 (650 aa).

One can recognise an IQ domain in the interval 16–45 (VIKAALVIQNWYRRYRARLRVRQHYALAIF). The interval 124–456 (IHILLQAFKQ…PQFFQYQVTS (333 aa)) is catalytic. Mn(2+) contacts are provided by D175, H177, D204, and N236. H237 functions as the Proton donor in the catalytic mechanism. Residue H288 coordinates Mn(2+). The interval 315-348 (PVLGNQETGEKRNKSASNYVEPRKVEPDKTPSED) is disordered. Positions 335–348 (EPRKVEPDKTPSED) are enriched in basic and acidic residues. H404 contacts Mn(2+). EF-hand domains follow at residues 484–519 (SRKT…ILGL), 567–602 (RYRS…FNAH), and 607–642 (IDDS…VHKY). Residues D497, S499, S501, R503, E508, D580, D582, S584, E591, D620, N622, D624, N626, and E631 each coordinate Ca(2+).

Belongs to the PPP phosphatase family. Requires Mn(2+) as cofactor. Mg(2+) is required as a cofactor. In terms of tissue distribution, in the embryo it is almost exclusively expressed in the peripheral nervous system, within sensory neurons of cranial and dorsal root ganglia. Otherwise found in fetal inner ear and a small group of neurons in the midbrain/pons junction.

It catalyses the reaction O-phospho-L-seryl-[protein] + H2O = L-seryl-[protein] + phosphate. The enzyme catalyses O-phospho-L-threonyl-[protein] + H2O = L-threonyl-[protein] + phosphate. Activated by calcium. Functionally, may have a role in the recovery or adaptation response of photoreceptors. May have a role in diverse sensory neurons and in development. The protein is Serine/threonine-protein phosphatase with EF-hands 1 (Ppef1) of Mus musculus (Mouse).